The sequence spans 295 residues: Epidermal growth factor-like protein 8 (295 aa).

An N-terminal signal peptide occupies residues 1–25; the sequence is MGSRAELHTLLGGLSFLLLLMSGQG. The region spanning 34 to 112 is the EMI domain; sequence SQGVCSRQTL…RHPGALTCDE (79 aa). 9 disulfides stabilise this stretch: Cys-38–Cys-97, Cys-65–Cys-71, Cys-96–Cys-110, Cys-115–Cys-125, Cys-119–Cys-131, Cys-133–Cys-142, Cys-149–Cys-160, Cys-156–Cys-169, and Cys-171–Cys-184. A glycan (N-linked (GlcNAc...) asparagine) is linked at Asn-50. One can recognise an EGF-like 1 domain in the interval 111-143; that stretch reads DEAICAKPCQNGGVCVRPDQCECAPGWGGRHCH. One can recognise an EGF-like 2; calcium-binding domain in the interval 145–185; that stretch reads DVDECRTGVTLCSHRCHNTAGSFTCGCPHGLVLGPDGRTCA. Residues 202-233 adopt a coiled-coil conformation; that stretch reads VREAGREDRALRREIRELRGRLERLEQWAGQA.

The protein resides in the secreted. The polypeptide is Epidermal growth factor-like protein 8 (EGFL8) (Sus scrofa (Pig)).